A 294-amino-acid chain; its full sequence is Metallophosphoesterase MPPED2 (294 aa).

Mn(2+) contacts are provided by aspartate 65, histidine 67, aspartate 86, asparagine 117, and histidine 213. 117-118 (NH) contacts GMP. GMP is bound by residues 225 to 226 (KE) and 252 to 255 (GIHE). Residue histidine 254 coordinates Mn(2+).

It belongs to the UPF0046 family. Homodimer. The cofactor is Mn(2+). Co(2+) is required as a cofactor.

With respect to regulation, inhibited by nmolar levels of AMP and GMP. Functionally, displays low metallophosphoesterase activity (in vitro). May play a role in the development of the nervous system. The sequence is that of Metallophosphoesterase MPPED2 (Mpped2) from Mus musculus (Mouse).